A 280-amino-acid polypeptide reads, in one-letter code: Probable endonuclease 4 (280 aa).

His-69, His-109, Glu-145, Asp-179, His-182, His-216, Asp-229, His-231, and Glu-261 together coordinate Zn(2+).

The protein belongs to the AP endonuclease 2 family. It depends on Zn(2+) as a cofactor.

It carries out the reaction Endonucleolytic cleavage to 5'-phosphooligonucleotide end-products.. Endonuclease IV plays a role in DNA repair. It cleaves phosphodiester bonds at apurinic or apyrimidinic (AP) sites, generating a 3'-hydroxyl group and a 5'-terminal sugar phosphate. The polypeptide is Probable endonuclease 4 (Aliarcobacter butzleri (strain RM4018) (Arcobacter butzleri)).